A 395-amino-acid chain; its full sequence is Imidazolonepropionase (395 aa).

Residues His-63 and His-65 each contribute to the Fe(3+) site. Zn(2+) contacts are provided by His-63 and His-65. 4-imidazolone-5-propanoate-binding residues include Arg-72, Tyr-135, and His-168. Tyr-135 serves as a coordination point for N-formimidoyl-L-glutamate. His-233 is a binding site for Fe(3+). A Zn(2+)-binding site is contributed by His-233. Gln-236 is a binding site for 4-imidazolone-5-propanoate. Asp-308 provides a ligand contact to Fe(3+). Residue Asp-308 coordinates Zn(2+). N-formimidoyl-L-glutamate contacts are provided by Asn-310 and Gly-312. Thr-313 contributes to the 4-imidazolone-5-propanoate binding site.

It belongs to the metallo-dependent hydrolases superfamily. HutI family. Requires Zn(2+) as cofactor. Fe(3+) is required as a cofactor.

It is found in the cytoplasm. The enzyme catalyses 4-imidazolone-5-propanoate + H2O = N-formimidoyl-L-glutamate. It participates in amino-acid degradation; L-histidine degradation into L-glutamate; N-formimidoyl-L-glutamate from L-histidine: step 3/3. Its function is as follows. Catalyzes the hydrolytic cleavage of the carbon-nitrogen bond in imidazolone-5-propanoate to yield N-formimidoyl-L-glutamate. It is the third step in the universal histidine degradation pathway. This Cereibacter sphaeroides (strain KD131 / KCTC 12085) (Rhodobacter sphaeroides) protein is Imidazolonepropionase.